We begin with the raw amino-acid sequence, 195 residues long: Nascent polypeptide-associated complex subunit alpha (195 aa).

Disordered stretches follow at residues 1 to 59 (MTGS…SRSE) and 132 to 153 (TREA…EEDS). Residues 7–16 (TRQKEVKEPQ) show a composition bias toward basic and acidic residues. The segment covering 19–33 (VSDDSDNEAVEQELT) has biased composition (acidic residues). Residues 47-59 (DHIDKQAKQSRSE) are compositionally biased toward basic and acidic residues. The 66-residue stretch at 56 to 121 (SRSEKKARKL…AKIEDLTQHA (66 aa)) folds into the NAC-A/B domain. Residues 142-153 (EEDENEDVEEDS) are compositionally biased toward acidic residues.

It belongs to the NAC-alpha family. As to quaternary structure, may be part of the nascent polypeptide-associated complex (NAC), which is a heterodimer of icd-2 and icd-1 (via NAC-A/B domains).

The protein localises to the cytoplasm. Its function is as follows. May prevent inappropriate targeting of non-secretory polypeptides to the endoplasmic reticulum (ER). Plays a role in the response to heat stress. The protein is Nascent polypeptide-associated complex subunit alpha of Caenorhabditis elegans.